We begin with the raw amino-acid sequence, 230 residues long: Ubiquitin carboxyl-terminal hydrolase isozyme L3 (230 aa).

Residues 5-229 enclose the UCH catalytic domain; the sequence is RWLPLEANPE…LRFNAIALSA (225 aa). The segment at 8–13 is interaction with ubiquitin; the sequence is PLEANP. The Nucleophile role is filled by Cys95. Ser130 carries the post-translational modification Phosphoserine. Residues 152–159 form an interaction with ubiquitin. Crossover loop which restricts access of large ubiquitin adducts to the active site region; the sequence is AHEGQTEA. Catalysis depends on His169, which acts as the Proton donor. An interaction with ubiquitin region spans residues 219-224; sequence ELRFNA.

The protein belongs to the peptidase C12 family. As to quaternary structure, preferentially binds diubiquitin; the interaction does not hydrolyze diubiquitin but, in vitro, inhibits the hydrolyzing activity on other substrates.

The protein localises to the cytoplasm. It carries out the reaction Thiol-dependent hydrolysis of ester, thioester, amide, peptide and isopeptide bonds formed by the C-terminal Gly of ubiquitin (a 76-residue protein attached to proteins as an intracellular targeting signal).. Inhibited by monoubiquitin and diubiquitin. In terms of biological role, deubiquitinating enzyme (DUB) that controls levels of cellular ubiquitin through processing of ubiquitin precursors and ubiquitinated proteins. Thiol protease that recognizes and hydrolyzes a peptide bond at the C-terminal glycine of either ubiquitin or NEDD8. Has a 10-fold preference for Arg and Lys at position P3''. Deubiquitinates ENAC in apical compartments, thereby regulating apical membrane recycling. Indirectly increases the phosphorylation of IGFIR, AKT and FOXO1 and promotes insulin-signaling and insulin-induced adipogenesis. Required for stress-response retinal, skeletal muscle and germ cell maintenance. May be involved in working memory. Can hydrolyze UBB(+1), a mutated form of ubiquitin which is not effectively degraded by the proteasome. In Bos taurus (Bovine), this protein is Ubiquitin carboxyl-terminal hydrolase isozyme L3 (UCHL3).